Consider the following 87-residue polypeptide: HssA/B-like protein 57 (87 aa).

This sequence belongs to the hssA/B family.

This chain is HssA/B-like protein 57 (hssl57), found in Dictyostelium discoideum (Social amoeba).